Here is a 299-residue protein sequence, read N- to C-terminus: Pyridoxal 5'-phosphate synthase subunit PdxS (299 aa).

Position 24 (D24) interacts with D-ribose 5-phosphate. K81 functions as the Schiff-base intermediate with D-ribose 5-phosphate in the catalytic mechanism. Residue G153 coordinates D-ribose 5-phosphate. R165 serves as a coordination point for D-glyceraldehyde 3-phosphate. D-ribose 5-phosphate-binding positions include G219 and 240–241 (GS).

This sequence belongs to the PdxS/SNZ family. In terms of assembly, in the presence of PdxT, forms a dodecamer of heterodimers.

It carries out the reaction aldehydo-D-ribose 5-phosphate + D-glyceraldehyde 3-phosphate + L-glutamine = pyridoxal 5'-phosphate + L-glutamate + phosphate + 3 H2O + H(+). It functions in the pathway cofactor biosynthesis; pyridoxal 5'-phosphate biosynthesis. Its function is as follows. Catalyzes the formation of pyridoxal 5'-phosphate from ribose 5-phosphate (RBP), glyceraldehyde 3-phosphate (G3P) and ammonia. The ammonia is provided by the PdxT subunit. Can also use ribulose 5-phosphate and dihydroxyacetone phosphate as substrates, resulting from enzyme-catalyzed isomerization of RBP and G3P, respectively. The protein is Pyridoxal 5'-phosphate synthase subunit PdxS of Methanococcus maripaludis (strain C7 / ATCC BAA-1331).